The sequence spans 66 residues: ARDAYIADDRNCVYTCALNPYCDSECKKNGADGSYCQWLGRFGNACWCKNLPDDVPIRKIPGEECR.

The 65-residue stretch at 2-66 (RDAYIADDRN…IRKIPGEECR (65 aa)) folds into the LCN-type CS-alpha/beta domain. 4 cysteine pairs are disulfide-bonded: C12–C65, C16–C36, C22–C46, and C26–C48.

Belongs to the long (4 C-C) scorpion toxin superfamily. Sodium channel inhibitor family. Alpha subfamily. Expressed by the venom gland.

The protein resides in the secreted. Alpha toxins bind voltage-independently at site-3 of sodium channels (Nav) and inhibit the inactivation of the activated channels, thereby blocking neuronal transmission. Has paralytic activity in mice. This Mesobuthus eupeus (Lesser Asian scorpion) protein is Toxin BeM14.